The primary structure comprises 355 residues: NAD-dependent protein deacylase sirtuin-6 (355 aa).

At Ser-2 the chain carries N-acetylserine. A Phosphoserine modification is found at Ser-10. The 246-residue stretch at 27–272 (PEELERKVWE…TQLMKHLGLE (246 aa)) folds into the Deacetylase sirtuin-type domain. N6-acetyllysine is present on Lys-33. NAD(+) contacts are provided by Ala-53, Thr-57, Phe-64, Arg-65, Trp-71, Gln-113, and His-133. The Proton acceptor role is filled by His-133. Cys-141, Cys-144, and Cys-166 together coordinate Zn(2+). Lys-170 is covalently cross-linked (Glycyl lysine isopeptide (Lys-Gly) (interchain with G-Cter in ubiquitin)). Cys-177 contributes to the Zn(2+) binding site. Positions 214, 216, 240, 242, and 258 each coordinate NAD(+). Positions 284–355 (KALPPLPRPP…KRVKAEVTPS (72 aa)) are disordered. Pro residues predominate over residues 287–296 (PPLPRPPTPK). Phosphothreonine is present on Thr-294. Phosphoserine is present on residues Ser-303 and Ser-330.

Belongs to the sirtuin family. Class IV subfamily. Homodimer; binds to nucleosomes and DNA ends as a homodimer. Interacts with RELA; interferes with RELA binding to target DNA. Interacts with SMARCA5; promoting recruitment of SMARCA5/SNF2H to double-strand breaks (DSBs) sites. Interacts with the mTORC2 complex; preventing the ability of SIRT6 to deacetylate FOXO1. Interacts with the CLOCK-BMAL1 complex; recruited by the CLOCK-BMAL1 complex to regulate expression of clock-controlled genes. Interacts with CSNK2A2; preventing CSNK2A2 localization to the nucleus. Post-translationally, acetylated at Lys-33. Deacetylation at Lys-33 by SIRT1 promotes homomultimerization and binding to double-strand breaks (DSBs) sites. Phosphorylation at Ser-10 by MAPK8/JNK1 in response to oxidative stress stimulates the mono-ADP-ribosyltransferase activity on PARP1, leading to PARP1 recruitment to double-strand breaks (DSBs). In terms of processing, monoubiquitinated at Lys-170 by STUB1/CHIP, preventing its degradation by the proteasome. Post-translationally, sumoylated, leading to specifically decrease ability to deacetylate histone H3 at 'Lys-56' (H3K56ac).

It is found in the nucleus. Its subcellular location is the chromosome. It localises to the telomere. The protein resides in the endoplasmic reticulum. The catalysed reaction is N(6)-acetyl-L-lysyl-[protein] + NAD(+) + H2O = 2''-O-acetyl-ADP-D-ribose + nicotinamide + L-lysyl-[protein]. It catalyses the reaction N(6)-tetradecanoyl-L-lysyl-[protein] + NAD(+) + H2O = 2''-O-tetradecanoyl-ADP-D-ribose + nicotinamide + L-lysyl-[protein]. It carries out the reaction N(6)-hexadecanoyl-L-lysyl-[protein] + NAD(+) + H2O = 2''-O-hexadecanoyl-ADP-D-ribose + nicotinamide + L-lysyl-[protein]. The enzyme catalyses L-lysyl-[protein] + NAD(+) = N(6)-(ADP-D-ribosyl)-L-lysyl-[protein] + nicotinamide + H(+). The catalysed reaction is L-arginyl-[protein] + NAD(+) = N(omega)-(ADP-D-ribosyl)-L-arginyl-[protein] + nicotinamide + H(+). Compared to the defatty-acylase activity, the protein deacetylase activity is weak in vitro, and requires activation. The histone deacetylase activity is strongly activated upon binding to nucleosomes and chromatin in vivo. Two molecules of SIRT6 associate with the acidic patch of one nucleosome, while the C-terminal disordered region of SIRT6 associates with nucleosomal DNA, leading to efficient histone deacetylation. The protein-lysine deacetylase activity is also activated by long-chain free fatty-acids. In terms of biological role, NAD-dependent protein deacetylase, deacylase and mono-ADP-ribosyltransferase that plays an essential role in DNA damage repair, telomere maintenance, metabolic homeostasis, inflammation, tumorigenesis and aging. Displays protein-lysine deacetylase or defatty-acylase (demyristoylase and depalmitoylase) activity, depending on the context. Acts as a key histone deacetylase by catalyzing deacetylation of histone H3 at 'Lys-9', 'Lys-18' and 'Lys-56' (H3K9ac, H3K18ac and H3K56ac, respectively), suppressing target gene expression of several transcription factors, including NF-kappa-B. Acts as an inhibitor of transcription elongation by mediating deacetylation of H3K9ac and H3K56ac, preventing release of NELFE from chromatin and causing transcriptional pausing. Involved in DNA repair by promoting double-strand break (DSB) repair: acts as a DSB sensor by recognizing and binding DSB sites, leading to (1) recruitment of DNA repair proteins, such as SMARCA5/SNF2H, and (2) deacetylation of histone H3K9ac and H3K56ac. SIRT6 participation to DSB repair is probably involved in extension of life span. Also promotes DNA repair by deacetylating non-histone proteins, such as DDB2 and p53/TP53. Specifically deacetylates H3K18ac at pericentric heterochromatin, thereby maintaining pericentric heterochromatin silencing at centromeres and protecting against genomic instability and cellular senescence. Involved in telomere maintenance by catalyzing deacetylation of histone H3 in telomeric chromatin, regulating telomere position effect and telomere movement in response to DNA damage. Required for embryonic stem cell differentiation by mediating histone deacetylation of H3K9ac. Plays a major role in metabolism by regulating processes such as glycolysis, gluconeogenesis, insulin secretion and lipid metabolism. Inhibits glycolysis via histone deacetylase activity and by acting as a corepressor of the transcription factor HIF1A, thereby controlling the expression of multiple glycolytic genes. Has tumor suppressor activity by repressing glycolysis, thereby inhibiting the Warburg effect. Also regulates glycolysis and tumorigenesis by mediating deacetylation and nuclear export of non-histone proteins, such as isoform M2 of PKM (PKM2). Acts as a negative regulator of gluconeogenesis by mediating deacetylation of non-histone proteins, such as FOXO1 and KAT2A/GCN5. Promotes beta-oxidation of fatty acids during fasting by catalyzing deacetylation of NCOA2, inducing coactivation of PPARA. Acts as a regulator of lipid catabolism in brown adipocytes, both by catalyzing deacetylation of histones and non-histone proteins, such as FOXO1. Also acts as a regulator of circadian rhythms, both by regulating expression of clock-controlled genes involved in lipid and carbohydrate metabolism, and by catalyzing deacetylation of PER2. The defatty-acylase activity is specifically involved in regulation of protein secretion. Has high activity toward long-chain fatty acyl groups and mediates protein-lysine demyristoylation and depalmitoylation of target proteins, such as RRAS2 and TNF, thereby regulating their secretion. Also acts as a mono-ADP-ribosyltransferase by mediating mono-ADP-ribosylation of PARP1, TRIM28/KAP1 or SMARCC2/BAF170. Mono-ADP-ribosyltransferase activity is involved in DNA repair, cellular senescence, repression of LINE-1 retrotransposon elements and regulation of transcription. This chain is NAD-dependent protein deacylase sirtuin-6, found in Castor canadensis (American beaver).